We begin with the raw amino-acid sequence, 406 residues long: LIM/homeobox protein Lhx2 (406 aa).

LIM zinc-binding domains are found at residues 53 to 105 (CAGC…CKED) and 115 to 168 (CARC…CRLH). The interval 250-270 (DAEHLDRDQPYPSSQKTKRMR) is disordered. Residues 266–325 (TKRMRTSFKHHQLRTMKSYFAINHNPDAKDLKQLAQKTGLTKRVLQVWFQNARAKFRRNL) constitute a DNA-binding region (homeobox). A Nuclear localization signal motif is present at residues 307-323 (KRVLQVWFQNARAKFRR). A compositionally biased stretch (polar residues) spans 328–356 (QENTGVDKTSDATLQTGTPSGPASELSNA). 2 disordered regions span residues 328-375 (QENT…SPTL) and 387-406 (GNLE…TNLF). Residues 357–375 (SLSPSSTPTTLTDLTSPTL) show a composition bias toward low complexity. Over residues 396 to 406 (SPSQTTLTNLF) the composition is skewed to polar residues.

As to quaternary structure, interacts (via LIM domains) with CITED2. Interacts with POU4F2 isoform 1.

Its subcellular location is the nucleus. Acts as a transcriptional activator. Stimulates the promoter of the alpha-glycoprotein gene. Transcriptional regulatory protein involved in the control of cell differentiation in developing lymphoid and neural cell types. The sequence is that of LIM/homeobox protein Lhx2 (Lhx2) from Mus musculus (Mouse).